A 448-amino-acid chain; its full sequence is Signal recognition particle 54 kDa protein (448 aa).

GTP is bound by residues 107 to 114 (GIQGSGKT), 189 to 193 (DSAGR), and 247 to 250 (TKLD).

The protein belongs to the GTP-binding SRP family. SRP54 subfamily. In terms of assembly, part of the signal recognition particle protein translocation system, which is composed of SRP and FtsY. Archaeal SRP consists of a 7S RNA molecule of 300 nucleotides and two protein subunits: SRP54 and SRP19.

It is found in the cytoplasm. It catalyses the reaction GTP + H2O = GDP + phosphate + H(+). Its function is as follows. Involved in targeting and insertion of nascent membrane proteins into the cytoplasmic membrane. Binds to the hydrophobic signal sequence of the ribosome-nascent chain (RNC) as it emerges from the ribosomes. The SRP-RNC complex is then targeted to the cytoplasmic membrane where it interacts with the SRP receptor FtsY. The chain is Signal recognition particle 54 kDa protein from Thermococcus kodakarensis (strain ATCC BAA-918 / JCM 12380 / KOD1) (Pyrococcus kodakaraensis (strain KOD1)).